The primary structure comprises 343 residues: Transmembrane protein 120A (343 aa).

The Cytoplasmic segment spans residues 1-132 (MQSPPPDPLG…KQAKFAYKDE (132 aa)). Lysine 130 provides a ligand contact to CoA. Residues 133–152 (YEKFKLYLTIILIVISFTCR) form a helical membrane-spanning segment. Over 153 to 158 (FLLNSR) the chain is Extracellular. A helical membrane pass occupies residues 159 to 177 (VTDAAFNFLLVWYYCTLTI). Over 178–190 (RESILINNGSRIK) the chain is Cytoplasmic. CoA is bound by residues serine 187 and arginine 188. A helical membrane pass occupies residues 191-209 (GWWVFHHYVSTFLSGVMLT). Over 210–218 (WPDGLMYQK) the chain is Extracellular. A helical membrane pass occupies residues 219 to 240 (FRNQFLSFSMYQSFVQFLQYYY). CoA contacts are provided by glutamine 237, tyrosine 240, glutamine 241, and histidine 283. Topologically, residues 241 to 270 (QSGCLYRLRALGERHTMDLTVEGFQSWMWR) are cytoplasmic. The chain crosses the membrane as a helical span at residues 271–294 (GLTFLLPFLFFGHFWQLFNALTLF). At 295–304 (NLARDPECKE) the chain is on the extracellular side. Residues 305-330 (WQVLMCGLPFLLLFLGNFFTTLRVVH) form a helical membrane-spanning segment. The Cytoplasmic portion of the chain corresponds to 331–343 (QKFHSQQHGSKKD). Lysine 332 serves as a coordination point for CoA.

It belongs to the TMEM120 family. In terms of assembly, homodimer. Forms heterooligomer with TMEM120B. Interacts with PKD2; TMEM120A inhibits PKD2 channel activity through the physical association of PKD2 with TMEM120A.

It localises to the cell membrane. It is found in the nucleus inner membrane. The protein localises to the endoplasmic reticulum. Its function is as follows. Multifunctional protein involved in mechanosensation, and plays an essential role in lipid metabolism and adipocyte differentiation. May function as a potential ion channel involved in sensing mechanical stimuli. Mediates the mechanosensitivity of the PKD2-TMEM120A channel complex through direct physical interaction. TMEM120A seems to affect mechanosensation by inhibiting PIEZO2 channels, possibly by altering cellular lipid content. TMEM120A is structurally similar to a lipid-modifying enzyme, ELOVL7, and contains a bound coenzyme A molecule, which suggests it might function as an enzyme in lipid metabolism. Additionnaly, implicated in innate immune response against Zika virus. Acts as a key activator of the antiviral signaling involving STING1. The protein is Transmembrane protein 120A of Rattus norvegicus (Rat).